We begin with the raw amino-acid sequence, 278 residues long: Large ribosomal subunit protein uL2 (278 aa).

Disordered regions lie at residues 27–58 (STPE…GGGH) and 224–278 (VVMN…GKKR). Positions 37–58 (LHGKGGRNAHGRITTRHKGGGH) are enriched in basic residues. Positions 253-268 (PEGRTRKPNKPSDKLI) are enriched in basic and acidic residues. Residues 269–278 (VRRRRTGKKR) show a composition bias toward basic residues.

This sequence belongs to the universal ribosomal protein uL2 family. Part of the 50S ribosomal subunit. Forms a bridge to the 30S subunit in the 70S ribosome.

Its function is as follows. One of the primary rRNA binding proteins. Required for association of the 30S and 50S subunits to form the 70S ribosome, for tRNA binding and peptide bond formation. It has been suggested to have peptidyltransferase activity; this is somewhat controversial. Makes several contacts with the 16S rRNA in the 70S ribosome. The protein is Large ribosomal subunit protein uL2 of Mycobacterium sp. (strain KMS).